The chain runs to 285 residues: Elongation factor Ts (285 aa).

The interval 84–87 (TDFV) is involved in Mg(2+) ion dislocation from EF-Tu.

The protein belongs to the EF-Ts family.

It localises to the cytoplasm. Associates with the EF-Tu.GDP complex and induces the exchange of GDP to GTP. It remains bound to the aminoacyl-tRNA.EF-Tu.GTP complex up to the GTP hydrolysis stage on the ribosome. The protein is Elongation factor Ts of Bifidobacterium animalis subsp. lactis (strain AD011).